The following is a 1400-amino-acid chain: Tensin-2 (1400 aa).

The segment at 31 to 79 (PHSFREKVFRKKTPVCAVCKVTIDGTGVSCRVCKVATHRKCEAKVTSSC) adopts a Phorbol-ester/DAG-type zinc-finger fold. Threonine 91 carries the post-translational modification Phosphothreonine. Phosphoserine is present on residues serine 118 and serine 120. The region spanning 122 to 294 (DPLMERRWDL…SYFSGLLSGS (173 aa)) is the Phosphatase tensin-type domain. Cysteine 231 serves as the catalytic Phosphocysteine intermediate. The 127-residue stretch at 299–425 (SSPLFLHYVF…ASVEFVFSSS (127 aa)) folds into the C2 tensin-type domain. The disordered stretch occupies residues 425-444 (SPEKVKGNTPRNDPSVSVDY). Residues 433–444 (TPRNDPSVSVDY) show a composition bias toward polar residues. Serine 455 carries the post-translational modification Phosphoserine. Position 456 is a phosphotyrosine (tyrosine 456). Serine 466 carries the phosphoserine modification. At threonine 474 the chain carries Phosphothreonine. The residue at position 481 (serine 481) is a Phosphoserine. Residue tyrosine 483 is modified to Phosphotyrosine. Residues 488-536 (RVPRQTPPAPSPELPPPPMLSVSSDSGHSSTLTTEHTAESPGRPPPTAA) are disordered. The segment covering 492 to 506 (QTPPAPSPELPPPPM) has biased composition (pro residues). Residue arginine 555 is modified to Omega-N-methylarginine. The tract at residues 809 to 1114 (CGSPSEGRGY…DVTQPPEHPL (306 aa)) is disordered. Phosphoserine is present on residues serine 820, serine 825, serine 830, serine 832, and serine 835. Composition is skewed to polar residues over residues 898-917 (CSAS…SSPV) and 929-940 (TRSPSLAPTQRL). Threonine 909 bears the Phosphothreonine mark. Phosphoserine is present on residues serine 931, serine 941, and serine 972. Threonine 977 is modified (phosphothreonine). Phosphoserine is present on residues serine 991 and serine 1003. The segment covering 1046 to 1056 (PEPPQSSPTPA) has biased composition (pro residues). Residues 1082–1098 (SGQQPSPPARSTNQHVT) are compositionally biased toward polar residues. The residue at position 1087 (serine 1087) is a Phosphoserine. Positions 1131-1238 (WYKPHLSRDQ…SLPCCLRIPS (108 aa)) constitute an SH2 domain. Phosphothreonine is present on threonine 1173. A Phosphoserine modification is found at serine 1238. The region spanning 1266–1399 (ACSVLYLTSV…FITKVLLGQR (134 aa)) is the PTB domain.

Belongs to the PTEN phosphatase protein family. In terms of assembly, interacts with AXL. Interacts with SYK; leading to its phosphorylation. Interacts with SQSTM1 (via PB1 domain); the interaction leads to sequestration of TNS2 in cytoplasmic aggregates with SQSTM1 and promotes TNS2 ubiquitination and proteasomal degradation. Ubiquitinated following sequestration in cytoplasmic aggregates with SQSTM1, leading to proteasomal degradation. As to expression, in the adult kidney, expressed mainly in glomeruli (at protein level). In the newborn kidney, localizes on the basal surface of podocytes along the glomerular basement membrane and not in endothelial cells. Low expression levels in anabolic skeletal muscles.

The protein resides in the cell junction. It localises to the focal adhesion. It is found in the cell membrane. The protein localises to the cytoplasm. It catalyses the reaction O-phospho-L-tyrosyl-[protein] + H2O = L-tyrosyl-[protein] + phosphate. In terms of biological role, tyrosine-protein phosphatase which regulates cell motility, proliferation and muscle-response to insulin. Phosphatase activity is mediated by binding to phosphatidylinositol-3,4,5-triphosphate (PtdIns(3,4,5)P3) via the SH2 domain. In muscles and under catabolic conditions, dephosphorylates IRS1 leading to its degradation and muscle atrophy. Negatively regulates PI3K-AKT pathway activation. Dephosphorylates nephrin NPHS1 in podocytes which affects mTORC1 complex activity. Under normal glucose conditions, NPHS1 outcompetes IRS1 for binding to phosphatidylinositol 3-kinase (PI3K) which balances mTORC1 activity but high glucose conditions lead to up-regulation of TNS2, increased NPHS1 dephosphorylation and activation of mTORC1, contributing to podocyte hypertrophy and proteinuria. Required for correct podocyte morphology, podocyte-glomerular basement membrane interaction and integrity of the glomerular filtration barrier. Enhances RHOA activation in the presence of DLC1. Plays a role in promoting DLC1-dependent remodeling of the extracellular matrix. The chain is Tensin-2 (Tns2) from Mus musculus (Mouse).